A 439-amino-acid chain; its full sequence is Chitinase-like protein Idgf1 (439 aa).

Residues 1 to 20 (MRFQLFYILGLLSVTSLTHA) form the signal peptide. A GH18 domain is found at 22-439 (SNLICYYDSN…ILRSIKYFMG (418 aa)). Cysteine 26 and cysteine 53 form a disulfide bridge. N-linked (GlcNAc...) asparagine glycosylation is found at asparagine 122, asparagine 218, and asparagine 346. An intrachain disulfide couples cysteine 340 to cysteine 423.

This sequence belongs to the glycosyl hydrolase 18 family. IDGF subfamily. In terms of tissue distribution, primarily expressed in yolk cells and fat body. In larvae, it is expressed in large salivary gland cells and weakly expressed in imaginal disks. Less expressed than Idgf2 and Idgf4.

The protein localises to the secreted. In terms of biological role, cooperates with insulin-like peptides to stimulate the proliferation, polarization and motility of imaginal disk cells. May act by stabilizing the binding of insulin-like peptides to its receptor through a simultaneous interaction with both molecules to form a multiprotein signaling complex. The sequence is that of Chitinase-like protein Idgf1 (Idgf1) from Drosophila melanogaster (Fruit fly).